The primary structure comprises 95 residues: Exodeoxyribonuclease 7 small subunit (95 aa).

A compositionally biased stretch (basic and acidic residues) spans 62 to 83 (LTKDESKKTNKTGFRGESKTTE). Positions 62 to 95 (LTKDESKKTNKTGFRGESKTTETKNNTAQEEDLF) are disordered.

It belongs to the XseB family. Heterooligomer composed of large and small subunits.

The protein localises to the cytoplasm. It carries out the reaction Exonucleolytic cleavage in either 5'- to 3'- or 3'- to 5'-direction to yield nucleoside 5'-phosphates.. In terms of biological role, bidirectionally degrades single-stranded DNA into large acid-insoluble oligonucleotides, which are then degraded further into small acid-soluble oligonucleotides. The sequence is that of Exodeoxyribonuclease 7 small subunit from Leptospira interrogans serogroup Icterohaemorrhagiae serovar copenhageni (strain Fiocruz L1-130).